We begin with the raw amino-acid sequence, 858 residues long: Ubiquitin carboxyl-terminal hydrolase 5 (858 aa).

N-acetylalanine is present on alanine 2. Residues 73 to 98 are disordered; the sequence is LRRTRRPKEEDTSAGTGDPPRKKPTR. Residue lysine 113 forms a Glycyl lysine isopeptide (Lys-Gly) (interchain with G-Cter in SUMO) linkage. Serine 149 and serine 156 each carry phosphoserine. The segment at 175-283 adopts a UBP-type; degenerate zinc-finger fold; it reads QVSKHAFNLK…EHLSHFGIDM (109 aa). The cysteines at positions 195 and 816 are disulfide-linked. 2 residues coordinate Zn(2+): cysteine 199 and cysteine 202. Position 209 (tryptophan 209) interacts with substrate. Cysteine 219 contacts Zn(2+). 221 to 224 is a substrate binding site; sequence RRYF. Histidine 232 is a Zn(2+) binding site. Substrate contacts are provided by tyrosine 259, tyrosine 261, and aspartate 264. Threonine 292 is subject to Phosphothreonine. Residues 326-856 form the USP domain; that stretch reads TGIRNLGNSC…LGYIYFYQRV (531 aa). Cysteine 335 (nucleophile) is an active-site residue. Residue threonine 623 is modified to Phosphothreonine. UBA domains follow at residues 654–695 and 722–762; these read MLDE…VMSH and PPPE…IFSH. 3 positions are modified to phosphoserine: serine 779, serine 783, and serine 785. Residue histidine 818 is the Proton acceptor of the active site.

Belongs to the peptidase C19 family. As to quaternary structure, homodimer. Interacts with TRIML1. SUMOylated at Lys-113; SUMOylation affects the interaction with Cav3.2 channels. Post-translationally, ubiquitinated by SMURF1; leading to proteasomal degradation.

It is found in the cytoplasm. The protein resides in the stress granule. Its subcellular location is the nucleus. It catalyses the reaction Thiol-dependent hydrolysis of ester, thioester, amide, peptide and isopeptide bonds formed by the C-terminal Gly of ubiquitin (a 76-residue protein attached to proteins as an intracellular targeting signal).. Functionally, deubiquitinating enzyme that participates in a wide range of cellular processes by specifically cleaving isopeptide bonds between ubiquitin and substrate proteins or ubiquitin itself. Affects thereby important cellular signaling pathways such as NF-kappa-B, Wnt/beta-catenin, and cytokine production by regulating ubiquitin-dependent protein degradation. Participates in the activation of the Wnt signaling pathway by promoting FOXM1 deubiquitination and stabilization that induces the recruitment of beta-catenin to Wnt target gene promoter. Regulates the assembly and disassembly of heat-induced stress granules by mediating the hydrolysis of unanchored ubiquitin chains. Promotes lipopolysaccharide-induced apoptosis and inflammatory response by stabilizing the TXNIP protein. Affects T-cell biology by stabilizing the inhibitory receptor on T-cells PDC1. Acts as a negative regulator of autophagy by regulating ULK1 at both protein and mRNA levels. Acts also as a negative regulator of type I interferon production by simultaneously removing both 'Lys-48'-linked unanchored and 'Lys-63'-linked anchored polyubiquitin chains on the transcription factor IRF3. Modulates the stability of DNA mismatch repair protein MLH1 and counteracts the effect of the ubiquitin ligase UBR4. Upon activation by insulin, it gets phosphorylated through mTORC1-mediated phosphorylation to enhance YTHDF1 stability by removing 'Lys-11'-linked polyubiquitination. May also deubiquitinate other substrates such as the calcium channel CACNA1H. The protein is Ubiquitin carboxyl-terminal hydrolase 5 (Usp5) of Mus musculus (Mouse).